Here is a 375-residue protein sequence, read N- to C-terminus: Alanine racemase (375 aa).

Catalysis depends on lysine 41, which acts as the Proton acceptor; specific for D-alanine. Lysine 41 carries the N6-(pyridoxal phosphate)lysine modification. Substrate is bound at residue arginine 141. Residue tyrosine 270 is the Proton acceptor; specific for L-alanine of the active site. Methionine 317 is a binding site for substrate.

Belongs to the alanine racemase family. Requires pyridoxal 5'-phosphate as cofactor.

It catalyses the reaction L-alanine = D-alanine. It participates in amino-acid biosynthesis; D-alanine biosynthesis; D-alanine from L-alanine: step 1/1. Functionally, catalyzes the interconversion of L-alanine and D-alanine. May also act on other amino acids. This chain is Alanine racemase (alr), found in Lactiplantibacillus plantarum (strain ATCC BAA-793 / NCIMB 8826 / WCFS1) (Lactobacillus plantarum).